A 77-amino-acid chain; its full sequence is MKNLLLTFLVVTIVCLDLGYTLICNRVHGLQTCEPAHKFCFSKTVMPFPNHPLTLMGCTYSCPTERNAVCCSTDKCN.

An N-terminal signal peptide occupies residues 1–21 (MKNLLLTFLVVTIVCLDLGYT). Disulfide bonds link Cys24–Cys40, Cys33–Cys58, Cys62–Cys70, and Cys71–Cys76.

Belongs to the three-finger toxin family. Short-chain subfamily. In terms of tissue distribution, expressed by the venom gland.

It localises to the secreted. Its function is as follows. This three-finger toxin binds and inhibits the nicotinic acetylcholine receptor (nAChR). This chain is Short neurotoxin OH-32, found in Ophiophagus hannah (King cobra).